We begin with the raw amino-acid sequence, 92 residues long: MKSIGVVRKVDELGRIVMPIELRRALDIAIKDSIEFFVDGDKIILKKYKPHGVCLMTGEITSENKEYGNGKITLSPEGAQLLLEEIQAALKE.

The region spanning 5–50 is the SpoVT-AbrB domain; that stretch reads GVVRKVDELGRIVMPIELRRALDIAIKDSIEFFVDGDKIILKKYKP.

To B.subtilis AbrB and SpoVT.

In Bacillus subtilis (strain 168), this protein is Putative transition state regulator Abh (abh).